The following is a 160-amino-acid chain: D-aminoacyl-tRNA deacylase (160 aa).

The Gly-cisPro motif, important for rejection of L-amino acids signature appears at 146 to 147 (GP).

It belongs to the DTD family. Homodimer.

The protein localises to the cytoplasm. The enzyme catalyses glycyl-tRNA(Ala) + H2O = tRNA(Ala) + glycine + H(+). It catalyses the reaction a D-aminoacyl-tRNA + H2O = a tRNA + a D-alpha-amino acid + H(+). Its function is as follows. An aminoacyl-tRNA editing enzyme that deacylates mischarged D-aminoacyl-tRNAs. Also deacylates mischarged glycyl-tRNA(Ala), protecting cells against glycine mischarging by AlaRS. Acts via tRNA-based rather than protein-based catalysis; rejects L-amino acids rather than detecting D-amino acids in the active site. By recycling D-aminoacyl-tRNA to D-amino acids and free tRNA molecules, this enzyme counteracts the toxicity associated with the formation of D-aminoacyl-tRNA entities in vivo and helps enforce protein L-homochirality. This is D-aminoacyl-tRNA deacylase from Desulfovibrio desulfuricans (strain ATCC 27774 / DSM 6949 / MB).